The primary structure comprises 255 residues: Small ribosomal subunit protein uS2 (255 aa).

The protein belongs to the universal ribosomal protein uS2 family.

This Streptococcus pyogenes serotype M1 protein is Small ribosomal subunit protein uS2 (rpsB).